The chain runs to 198 residues: Segregation and condensation protein B (198 aa).

The tract at residues 168-198 (KLADPATDEPDQNEMDLFFDRFNQSKEQEEE) is disordered.

This sequence belongs to the ScpB family. As to quaternary structure, homodimer. Homodimerization may be required to stabilize the binding of ScpA to the Smc head domains. Component of a cohesin-like complex composed of ScpA, ScpB and the Smc homodimer, in which ScpA and ScpB bind to the head domain of Smc. The presence of the three proteins is required for the association of the complex with DNA.

The protein resides in the cytoplasm. Its function is as follows. Participates in chromosomal partition during cell division. May act via the formation of a condensin-like complex containing Smc and ScpA that pull DNA away from mid-cell into both cell halves. This is Segregation and condensation protein B from Listeria monocytogenes serotype 4b (strain CLIP80459).